A 182-amino-acid polypeptide reads, in one-letter code: Pentatricopeptide repeat-containing protein At2g01360 (182 aa).

3 PPR repeats span residues 30–64 (EKSA…QHSL), 65–95 (GVYH…LPDD), and 98–132 (GLSA…EIMP).

This sequence belongs to the PPR family. P subfamily.

This Arabidopsis thaliana (Mouse-ear cress) protein is Pentatricopeptide repeat-containing protein At2g01360.